A 504-amino-acid polypeptide reads, in one-letter code: Hydroxyisobutyraldehyde dehydrogenase (504 aa).

Glutamate 260 serves as the catalytic Proton acceptor. Cysteine 294 (nucleophile) is an active-site residue.

It belongs to the aldehyde dehydrogenase family.

Its subcellular location is the cytoplasm. It carries out the reaction 2-hydroxy-2-methylpropanal + NAD(+) + H2O = 2-hydroxy-2-methylpropanoate + NADH + 2 H(+). In terms of biological role, involved in the degradation of methyl tert-butyl ether (MTBE). Catalyzes the conversion of hydroxyisobutyraldehyde to hydroxyisobutyric acid (HIBA). This chain is Hydroxyisobutyraldehyde dehydrogenase, found in Mycolicibacterium austroafricanum (Mycobacterium austroafricanum).